The chain runs to 438 residues: Gamma-glutamyl phosphate reductase (438 aa).

It belongs to the gamma-glutamyl phosphate reductase family.

Its subcellular location is the cytoplasm. The enzyme catalyses L-glutamate 5-semialdehyde + phosphate + NADP(+) = L-glutamyl 5-phosphate + NADPH + H(+). Its pathway is amino-acid biosynthesis; L-proline biosynthesis; L-glutamate 5-semialdehyde from L-glutamate: step 2/2. In terms of biological role, catalyzes the NADPH-dependent reduction of L-glutamate 5-phosphate into L-glutamate 5-semialdehyde and phosphate. The product spontaneously undergoes cyclization to form 1-pyrroline-5-carboxylate. This chain is Gamma-glutamyl phosphate reductase, found in Prochlorococcus marinus (strain MIT 9303).